Here is a 56-residue protein sequence, read N- to C-terminus: Protein hunchback (56 aa).

3 C2H2-type zinc fingers span residues 1–5, 11–33, and 39–56; these read HLRNH, FKCD…LKSH, and FRCS…SLKL.

This sequence belongs to the hunchback C2H2-type zinc-finger protein family.

Its subcellular location is the nucleus. Its function is as follows. Gap class segmentation protein that controls development of head structures. The polypeptide is Protein hunchback (hb) (Euscelis plebejus (Leafhopper)).